The sequence spans 178 residues: ATP-dependent protease subunit HslV (178 aa).

Residue Thr7 is part of the active site. Na(+)-binding residues include Gly162, Cys165, and Thr168.

The protein belongs to the peptidase T1B family. HslV subfamily. As to quaternary structure, a double ring-shaped homohexamer of HslV is capped on each side by a ring-shaped HslU homohexamer. The assembly of the HslU/HslV complex is dependent on binding of ATP.

It localises to the cytoplasm. The catalysed reaction is ATP-dependent cleavage of peptide bonds with broad specificity.. With respect to regulation, allosterically activated by HslU binding. Functionally, protease subunit of a proteasome-like degradation complex believed to be a general protein degrading machinery. This Burkholderia ambifaria (strain ATCC BAA-244 / DSM 16087 / CCUG 44356 / LMG 19182 / AMMD) (Burkholderia cepacia (strain AMMD)) protein is ATP-dependent protease subunit HslV.